Reading from the N-terminus, the 573-residue chain is Oxygen sensor histidine kinase response regulator DosT (573 aa).

GAF domains lie at 61-198 (KLDA…GIAV) and 229-366 (DPAM…ALAW). Position 147 (His-147) interacts with heme. The 194-residue stretch at 380-573 (ILTDRDRIAR…TLLRWSAPLR (194 aa)) folds into the Histidine kinase domain. His-392 bears the Phosphohistidine; by autocatalysis mark.

Mg(2+) serves as cofactor. The cofactor is heme.

The protein resides in the cytoplasm. Its function is as follows. Interacts with the two-component regulatory system DevR/DevS (DosR/DosS) involved in onset of the dormancy response. Required for full induction of the DevR (DosR) regulon; required during early adaptation to anaerobiosis, to start induction of the DevR regulon. May act as a direct hypoxia/oxygen sensor. May be the secondary sensor for CO. Donates a phosphate group to DevR (DosR). The polypeptide is Oxygen sensor histidine kinase response regulator DosT (dosT) (Mycobacterium tuberculosis (strain CDC 1551 / Oshkosh)).